A 636-amino-acid polypeptide reads, in one-letter code: Epsin-3 (636 aa).

Arg8, Lys11, Arg25, Asn30, Arg63, and His73 together coordinate a 1,2-diacyl-sn-glycero-3-phospho-(1D-myo-inositol-4,5-bisphosphate). Residues 12–144 (NIVHNYSEAE…KDEERLRQER (133 aa)) enclose the ENTH domain. Residues 153–503 (RMALEGMGIG…TPESFLGPSA (351 aa)) are disordered. A compositionally biased stretch (low complexity) spans 174–189 (GSPSSYTSASSSPRYA). Phosphoserine occurs at positions 184 and 185. UIM domains follow at residues 202 to 221 (EEEL…AERP) and 229 to 248 (DEDL…HEKG). 2 stretches are compositionally biased toward basic and acidic residues: residues 214 to 231 (SREE…RDED) and 242 to 256 (RQEH…KGDD). Position 257 is a phosphoserine (Ser257). Residues 270–288 (RQRDREPEREERKEEEKLK) show a composition bias toward basic and acidic residues. Repeat copies occupy residues 315–317 (DPW), 338–340 (DPW), 365–367 (EPW), 381–383 (DPW), and 398–400 (DPW). The tract at residues 315–400 (DPWDIPGLRP…KLPSTGADPW (86 aa)) is 5 X 3 AA repeats of [DE]-P-W. Residues 426 to 435 (ESTEPKESRD) show a composition bias toward basic and acidic residues. 2 tandem repeats follow at residues 523-525 (NPF) and 536-538 (NPF). The 3 X 3 AA repeats of N-P-F stretch occupies residues 523 to 635 (NPFLTGLGVP…LPPQAGTNPF (113 aa)). Positions 607 to 616 (PPPASLPQPL) are enriched in pro residues. The interval 607-636 (PPPASLPQPLLPTSGPMGPLPPQAGTNPFL) is disordered. Copy 3 of the repeat occupies 633–635 (NPF).

The protein belongs to the epsin family.

The protein resides in the cytoplasm. The protein localises to the cell cortex. It is found in the perinuclear region. Its subcellular location is the cytoplasmic vesicle. It localises to the clathrin-coated vesicle. In Mus musculus (Mouse), this protein is Epsin-3 (Epn3).